The sequence spans 196 residues: Probable nicotinate-nucleotide adenylyltransferase (196 aa).

The protein belongs to the NadD family.

It catalyses the reaction nicotinate beta-D-ribonucleotide + ATP + H(+) = deamido-NAD(+) + diphosphate. The protein operates within cofactor biosynthesis; NAD(+) biosynthesis; deamido-NAD(+) from nicotinate D-ribonucleotide: step 1/1. Functionally, catalyzes the reversible adenylation of nicotinate mononucleotide (NaMN) to nicotinic acid adenine dinucleotide (NaAD). In Caldicellulosiruptor bescii (strain ATCC BAA-1888 / DSM 6725 / KCTC 15123 / Z-1320) (Anaerocellum thermophilum), this protein is Probable nicotinate-nucleotide adenylyltransferase.